The sequence spans 680 residues: Heterokaryon incompatibility protein 6, OR allele (680 aa).

In terms of biological role, involved in the non-self-recognition during asexual growth of N.crassa. This process involves restriction of heterokaryon formation via genetic differences at 11 het loci, including mating type. This is Heterokaryon incompatibility protein 6, OR allele (het-6) from Neurospora crassa (strain ATCC 24698 / 74-OR23-1A / CBS 708.71 / DSM 1257 / FGSC 987).